The primary structure comprises 136 residues: Protein PsiE (136 aa).

4 consecutive transmembrane segments (helical) span residues 15 to 35 (ILQT…VVFL), 55 to 75 (YELV…ALIV), 82 to 102 (FHFP…RLII), and 108 to 128 (PLDV…LWLC).

Belongs to the PsiE family.

It is found in the cell inner membrane. The sequence is that of Protein PsiE from Escherichia coli (strain UTI89 / UPEC).